A 701-amino-acid chain; its full sequence is Type 3 secretion system secretin (701 aa).

The first 21 residues, 1-21, serve as a signal peptide directing secretion; the sequence is MRKALMWLPLLLIGLSPATWA. The span at 229–238 shows a compositional bias: gly residues; the sequence is RGNGLAGGGS. Residues 229–252 are disordered; that stretch reads RGNGLAGGGSPDTPSLPMSSSGLD. Residues 240–252 show a composition bias toward polar residues; it reads DTPSLPMSSSGLD.

It belongs to the bacterial secretin family. T3SS SctC subfamily. In terms of assembly, the core secretion machinery of the T3SS is composed of approximately 20 different proteins, including cytoplasmic components, a base, an export apparatus and a needle. This subunit is part of the base, which anchors the injectisome in the bacterial cell envelope. Forms a stable homooligomeric complex.

It localises to the cell outer membrane. Its function is as follows. Component of the type III secretion system (T3SS), also called injectisome, which is used to inject bacterial effector proteins into eukaryotic host cells. Forms a ring-shaped multimeric structure with an apparent central pore in the outer membrane. Involved in the secretion of a proteinaceous elicitor of the hypersensitivity response in plants. In Pseudomonas syringae pv. syringae, this protein is Type 3 secretion system secretin.